Consider the following 433-residue polypeptide: MIKGRRTKLHTFLYDCFLIFAFMVGLPRILYKRFVHGKYTKSLGIRFGFKKPEVPGTGPVAWFHGASVGETALLLPLLKRFMKEYPEWRCVVTSCTESGHENAHRLFGPLGVTTFILPLDLSIIIKPVVRAISPSLLVFSEGDCWLNFIEEAKRLGATAVIINGKLSANSCKRFTILKRFGRNYFSPVDGFLLQDEQHKARFLQLGVDKEKIQVTGNIKTYTETLSENNQRDYWREKLQLAQDTELLVLGSVHPKDVEVWLPVVRELRRNLKVLWVPRHIERSKELEALLSKENISYGLWSKEATFAQHDAIIVDAIGWLKQLYSAADLAFVGGTFDDRIGGHNLLEPLQCGVPLIFGPHIQSQSDLAERLLSMGAGCCLDKTNIVKVITFLLDHPEERAAYIQKGAMFLHEEKVAFDRTWESFKRYIPCVKI.

Residues T11–Y31 traverse the membrane as a helical; Signal-anchor segment. The active-site Proton acceptor is E70. CMP contacts are provided by residues P277–R278, I317–W319, and N344–E347.

The protein belongs to the glycosyltransferase group 1 family. Glycosyltransferase 30 subfamily.

It localises to the cell inner membrane. It carries out the reaction lipid IVA (E. coli) + CMP-3-deoxy-beta-D-manno-octulosonate = alpha-Kdo-(2-&gt;6)-lipid IVA (E. coli) + CMP + H(+). The enzyme catalyses alpha-Kdo-(2-&gt;6)-lipid IVA (E. coli) + CMP-3-deoxy-beta-D-manno-octulosonate = alpha-Kdo-(2-&gt;4)-alpha-Kdo-(2-&gt;6)-lipid IVA (E. coli) + CMP + H(+). The catalysed reaction is alpha-Kdo-(2-&gt;4)-alpha-Kdo-(2-&gt;6)-lipid IVA (E. coli) + CMP-3-deoxy-beta-D-manno-octulosonate = alpha-Kdo-(2-&gt;8)-alpha-Kdo-(2-&gt;4)-alpha-Kdo-(2-&gt;6)-lipid IVA (E. coli) + CMP + H(+). It catalyses the reaction alpha-Kdo-(2-&gt;8)-alpha-Kdo-(2-&gt;4)-alpha-Kdo-(2-&gt;6)-lipid IVA (E. coli) + CMP-3-deoxy-beta-D-manno-octulosonate = alpha-Kdo-(2-&gt;8)-[alpha-Kdo-(2-&gt;4)]-alpha-Kdo-(2-&gt;4)-alpha-Kdo-(2-&gt;6)-lipid IVA + CMP + H(+). The protein operates within bacterial outer membrane biogenesis; LPS core biosynthesis. Its function is as follows. Involved in lipopolysaccharide (LPS) biosynthesis. Catalyzes the transfer of predominantly four 3-deoxy-D-manno-octulosonate (Kdo) residues from CMP-Kdo to lipid IV(A), the tetraacyldisaccharide-1,4'-bisphosphate precursor of lipid A. Thus generates the genus-specific LPS epitope of Chlamydia, composed of the trisaccharide alpha-Kdo-(2-&gt;8)-alpha-Kdo-(2-&gt;4)-alpha-Kdo. This Chlamydophila psittaci (strain ATCC VR-125 / 6BC) (Chlamydia psittaci) protein is 3-deoxy-D-manno-octulosonic acid transferase (waaA).